The following is a 92-amino-acid chain: Probable glutathione transferase (92 aa).

A GST N-terminal domain is found at Arg-1–Pro-71. Catalysis depends on Cys-3, which acts as the Nucleophile. Glutathione contacts are provided by residues Lys-30, Val-43, and Glu-55–Ser-56.

The protein belongs to the GST superfamily. Omega family.

The enzyme catalyses RX + glutathione = an S-substituted glutathione + a halide anion + H(+). The catalysed reaction is L-dehydroascorbate + 2 glutathione = glutathione disulfide + L-ascorbate. It carries out the reaction methylarsonate + 2 glutathione + H(+) = methylarsonous acid + glutathione disulfide + H2O. Its function is as follows. Exhibits glutathione-dependent thiol transferase activity. Has dehydroascorbate reductase activity and may contribute to the recycling of ascorbic acid. Participates in the biotransformation of inorganic arsenic and reduces monomethylarsonic acid (MMA). The polypeptide is Probable glutathione transferase (Aplysia californica (California sea hare)).